The sequence spans 154 residues: Terephthalate 1,2-dioxygenase, terminal oxygenase component subunit beta 1 (154 aa).

This sequence belongs to the bacterial ring-hydroxylating dioxygenase beta subunit family. In terms of assembly, heterotetramer composed of 2 alpha (TphA2I and TphA2II) and 2 beta (TphA3I and TphA3II) subunits. Part of a multicomponent enzyme system composed of a reductase (TphA1I or TphA1II) and a two-subunit oxygenase component (TphA2I or TphA2II and TphA3I or TphA3II). It depends on Fe cation as a cofactor.

It catalyses the reaction terephthalate + NADH + O2 + H(+) = (3S,4R)-3,4-dihydroxycyclohexa-1,5-diene-1,4-dicarboxylate + NAD(+). Its activity is regulated as follows. Inhibited by EDTA. Functionally, component of the terephthalate 1,2-dioxygenase multicomponent enzyme system which catalyzes the dioxygenation of terephthalate (TER/TPA) to 1,2-dihydroxy-3,5-cyclohexadiene-1,4-dicarboxylic acid (DCD). It can also use 2,5-dicarboxypyridine (PDC) and 1,4-napthalenedicarboxylic acid (NDC) as substrates, and preferentially uses NADPH which is the physiological electron donor. This is Terephthalate 1,2-dioxygenase, terminal oxygenase component subunit beta 1 (tphA3I) from Comamonas sp.